A 348-amino-acid chain; its full sequence is Spermidine/putrescine import ATP-binding protein PotA (348 aa).

Positions 6–236 (IRLVNVTKEY…PKNVFVADFI (231 aa)) constitute an ABC transporter domain. Position 38–45 (38–45 (GPSGCGKT)) interacts with ATP.

The protein belongs to the ABC transporter superfamily. Spermidine/putrescine importer (TC 3.A.1.11.1) family. As to quaternary structure, the complex is composed of two ATP-binding proteins (PotA), two transmembrane proteins (PotB and PotC) and a solute-binding protein (PotD).

Its subcellular location is the cell membrane. It catalyses the reaction ATP + H2O + polyamine-[polyamine-binding protein]Side 1 = ADP + phosphate + polyamineSide 2 + [polyamine-binding protein]Side 1.. Part of the ABC transporter complex PotABCD involved in spermidine/putrescine import. Responsible for energy coupling to the transport system. This Desulfitobacterium hafniense (strain Y51) protein is Spermidine/putrescine import ATP-binding protein PotA.